Reading from the N-terminus, the 299-residue chain is Taste receptor type 2 member 50 (299 aa).

A topological domain (extracellular) is located at residue Met1. Residues 2–22 traverse the membrane as a helical segment; sequence VTFLHIFFSILILVLFVLGNF. The Cytoplasmic portion of the chain corresponds to 23-55; it reads ANGFIALVNFIDLVKRKKISSADQILTALAVSR. Residues 56–76 form a helical membrane-spanning segment; that stretch reads IGLLWALLLNWYLTVLNPAFY. The Extracellular portion of the chain corresponds to 77-87; sequence SVELRITSYNA. The helical transmembrane segment at 88–108 threads the bilayer; that stretch reads WVVTNHFSMWLAASLSIFYLL. Residues 109–126 lie on the Cytoplasmic side of the membrane; sequence KIANFSNLIFLHLKRRVR. Residues 127–147 traverse the membrane as a helical segment; that stretch reads SVILVILLGPLTFLVCHLFVA. Topologically, residues 148-181 are extracellular; that stretch reads NMDESMSAEEYEGNMTGKLKLRNTVHLSYLTVTT. An N-linked (GlcNAc...) asparagine glycan is attached at Asn161. Residues 182 to 202 form a helical membrane-spanning segment; that stretch reads LWSFIPFTLSLISFLMLICSL. Topologically, residues 203–229 are cytoplasmic; the sequence is CKHVKKMQLHGEGSQDLSTKVHIKALQ. The chain crosses the membrane as a helical span at residues 230 to 250; that stretch reads TLISFLLLCAIFFLFLIISIW. Over 251–259 the chain is Extracellular; the sequence is NPRRLQNDP. The helical transmembrane segment at 260 to 280 threads the bilayer; the sequence is VVVVSKAVGNIYLALDSFILI. Over 281–299 the chain is Cytoplasmic; the sequence is WRTKKLKHTFLLILCQIRC.

Belongs to the G-protein coupled receptor T2R family.

The protein localises to the membrane. In terms of biological role, receptor that may play a role in the perception of bitterness and is gustducin-linked. May play a role in sensing the chemical composition of the gastrointestinal content. The activity of this receptor may stimulate alpha gustducin, mediate PLC-beta-2 activation and lead to the gating of TRPM5. This is Taste receptor type 2 member 50 (TAS2R50) from Pongo pygmaeus (Bornean orangutan).